The chain runs to 164 residues: NADH-quinone oxidoreductase subunit I 1 (164 aa).

2 consecutive 4Fe-4S ferredoxin-type domains span residues 54 to 84 (LRRY…IEAG) and 95 to 124 (VRYD…EGPN). 8 residues coordinate [4Fe-4S] cluster: C64, C67, C70, C74, C104, C107, C110, and C114.

It belongs to the complex I 23 kDa subunit family. In terms of assembly, NDH-1 is composed of 14 different subunits. Subunits NuoA, H, J, K, L, M, N constitute the membrane sector of the complex. It depends on [4Fe-4S] cluster as a cofactor.

The protein resides in the cell inner membrane. The enzyme catalyses a quinone + NADH + 5 H(+)(in) = a quinol + NAD(+) + 4 H(+)(out). Its function is as follows. NDH-1 shuttles electrons from NADH, via FMN and iron-sulfur (Fe-S) centers, to quinones in the respiratory chain. The immediate electron acceptor for the enzyme in this species is believed to be ubiquinone. Couples the redox reaction to proton translocation (for every two electrons transferred, four hydrogen ions are translocated across the cytoplasmic membrane), and thus conserves the redox energy in a proton gradient. This is NADH-quinone oxidoreductase subunit I 1 from Rhizobium meliloti (strain 1021) (Ensifer meliloti).